The chain runs to 234 residues: Ribonuclease 3 (234 aa).

The RNase III domain maps to 6 to 134 (RKSLEERVGH…IVGALYLDGG (129 aa)). Glutamate 47 provides a ligand contact to Mg(2+). Aspartate 51 is a catalytic residue. Positions 120 and 123 each coordinate Mg(2+). Residue glutamate 123 is part of the active site. Residues 162-231 (DYKTRLQELV…AKNALEMKYK (70 aa)) enclose the DRBM domain.

It belongs to the ribonuclease III family. Homodimer. It depends on Mg(2+) as a cofactor.

The protein localises to the cytoplasm. It catalyses the reaction Endonucleolytic cleavage to 5'-phosphomonoester.. Digests double-stranded RNA. Involved in the processing of primary rRNA transcript to yield the immediate precursors to the large and small rRNAs (23S and 16S). Processes some mRNAs, and tRNAs when they are encoded in the rRNA operon. Processes pre-crRNA and tracrRNA of type II CRISPR loci if present in the organism. The protein is Ribonuclease 3 of Bdellovibrio bacteriovorus (strain ATCC 15356 / DSM 50701 / NCIMB 9529 / HD100).